Consider the following 410-residue polypeptide: Argininosuccinate synthase (410 aa).

Position 10–18 (10–18 (AYSGGLDTS)) interacts with ATP. Residues Tyr88 and Ser93 each coordinate L-citrulline. Gly118 contacts ATP. Positions 120, 124, and 125 each coordinate L-aspartate. Asn124 is a binding site for L-citrulline. Arg128, Ser177, Ser186, Glu262, and Tyr274 together coordinate L-citrulline.

This sequence belongs to the argininosuccinate synthase family. Type 1 subfamily. Homotetramer.

It localises to the cytoplasm. It carries out the reaction L-citrulline + L-aspartate + ATP = 2-(N(omega)-L-arginino)succinate + AMP + diphosphate + H(+). It functions in the pathway amino-acid biosynthesis; L-arginine biosynthesis; L-arginine from L-ornithine and carbamoyl phosphate: step 2/3. The protein is Argininosuccinate synthase of Caldanaerobacter subterraneus subsp. tengcongensis (strain DSM 15242 / JCM 11007 / NBRC 100824 / MB4) (Thermoanaerobacter tengcongensis).